Here is a 258-residue protein sequence, read N- to C-terminus: UPF0246 protein YaaA (258 aa).

It belongs to the UPF0246 family.

The polypeptide is UPF0246 protein YaaA (Shigella boydii serotype 18 (strain CDC 3083-94 / BS512)).